A 234-amino-acid chain; its full sequence is Isoprenyl transferase (234 aa).

Residue aspartate 13 is part of the active site. Aspartate 13 lines the Mg(2+) pocket. Substrate-binding positions include 14-17 (GNGR), tryptophan 18, arginine 26, histidine 30, and 58-60 (STE). Catalysis depends on asparagine 61, which acts as the Proton acceptor. Residues tryptophan 62, arginine 64, arginine 180, and 186-188 (RLS) each bind substrate. Glutamate 199 is a Mg(2+) binding site.

The protein belongs to the UPP synthase family. Homodimer. Mg(2+) is required as a cofactor.

In terms of biological role, catalyzes the condensation of isopentenyl diphosphate (IPP) with allylic pyrophosphates generating different type of terpenoids. The chain is Isoprenyl transferase (uppS) from Helicobacter pylori (strain ATCC 700392 / 26695) (Campylobacter pylori).